A 116-amino-acid chain; its full sequence is Putative RNase MJ0125 (116 aa).

Residues arginine 76 and histidine 81 contribute to the active site. Positions 76-83 (RDKLIHQY) match the RX(4)HXY motif motif. Tyrosine 83 carries the O-di-AMP-tyrosine modification.

Belongs to the HepT RNase toxin family. Homodimer, probably forms a complex with cognate antitoxin MJ0126. Modified by cognate antitoxin MJ0126; probably at least 2 successive AMPylation events occur on Tyr-83.

Probable toxic component of a putative type VII toxin-antitoxin (TA) system, probably an RNase. Probably neutralized by cognate antitoxin MJ0126. Neutralization may be due to AMPylation by MJ0126. This is Putative RNase MJ0125 from Methanocaldococcus jannaschii (strain ATCC 43067 / DSM 2661 / JAL-1 / JCM 10045 / NBRC 100440) (Methanococcus jannaschii).